The sequence spans 250 residues: 2,3-bisphosphoglycerate-dependent phosphoglycerate mutase (250 aa).

Substrate-binding positions include 10 to 17, 23 to 24, R62, 89 to 92, K100, 116 to 117, and 185 to 186; these read RHGESQWN, TG, ERHY, RR, and GN. The active-site Tele-phosphohistidine intermediate is H11. E89 functions as the Proton donor/acceptor in the catalytic mechanism.

The protein belongs to the phosphoglycerate mutase family. BPG-dependent PGAM subfamily. Homodimer.

It catalyses the reaction (2R)-2-phosphoglycerate = (2R)-3-phosphoglycerate. It functions in the pathway carbohydrate degradation; glycolysis; pyruvate from D-glyceraldehyde 3-phosphate: step 3/5. Catalyzes the interconversion of 2-phosphoglycerate and 3-phosphoglycerate. This Sodalis glossinidius (strain morsitans) protein is 2,3-bisphosphoglycerate-dependent phosphoglycerate mutase.